A 297-amino-acid chain; its full sequence is N-acetylneuraminate lyase (297 aa).

Aceneuramate is bound by residues Ser-47 and Thr-48. Residue Tyr-137 is the Proton donor of the active site. The active-site Schiff-base intermediate with substrate is the Lys-165. The aceneuramate site is built by Thr-167, Gly-189, Asp-191, Glu-192, and Ser-208.

This sequence belongs to the DapA family. NanA subfamily. In terms of assembly, homotetramer.

The protein localises to the cytoplasm. The enzyme catalyses aceneuramate = aldehydo-N-acetyl-D-mannosamine + pyruvate. The protein operates within amino-sugar metabolism; N-acetylneuraminate degradation; D-fructose 6-phosphate from N-acetylneuraminate: step 1/5. Catalyzes the reversible aldol cleavage of N-acetylneuraminic acid (sialic acid; Neu5Ac) to form pyruvate and N-acetylmannosamine (ManNAc) via a Schiff base intermediate. The protein is N-acetylneuraminate lyase of Salmonella agona (strain SL483).